The primary structure comprises 276 residues: Diaminopimelate epimerase (276 aa).

Substrate-binding residues include Asn13, Gln46, and Asn66. Cys75 serves as the catalytic Proton donor. Substrate is bound by residues 76–77 (GN), Asn159, Asn192, and 210–211 (ER). Cys219 serves as the catalytic Proton acceptor. Substrate is bound at residue 220–221 (GS).

Belongs to the diaminopimelate epimerase family. Homodimer.

Its subcellular location is the cytoplasm. It carries out the reaction (2S,6S)-2,6-diaminopimelate = meso-2,6-diaminopimelate. It participates in amino-acid biosynthesis; L-lysine biosynthesis via DAP pathway; DL-2,6-diaminopimelate from LL-2,6-diaminopimelate: step 1/1. In terms of biological role, catalyzes the stereoinversion of LL-2,6-diaminopimelate (L,L-DAP) to meso-diaminopimelate (meso-DAP), a precursor of L-lysine and an essential component of the bacterial peptidoglycan. The protein is Diaminopimelate epimerase of Vibrio parahaemolyticus serotype O3:K6 (strain RIMD 2210633).